Reading from the N-terminus, the 398-residue chain is Acetate kinase (398 aa).

Mg(2+) is bound at residue Asn7. Lys14 is a binding site for ATP. Residue Arg91 coordinates substrate. Residue Asp148 is the Proton donor/acceptor of the active site. ATP contacts are provided by residues 208–212, 282–284, and 330–334; these read HLGNG, DFR, and GVGEN. Residue Glu383 participates in Mg(2+) binding.

Belongs to the acetokinase family. Homodimer. The cofactor is Mg(2+). It depends on Mn(2+) as a cofactor.

It localises to the cytoplasm. It catalyses the reaction acetate + ATP = acetyl phosphate + ADP. It participates in metabolic intermediate biosynthesis; acetyl-CoA biosynthesis; acetyl-CoA from acetate: step 1/2. Functionally, catalyzes the formation of acetyl phosphate from acetate and ATP. Can also catalyze the reverse reaction. This chain is Acetate kinase, found in Carboxydothermus hydrogenoformans (strain ATCC BAA-161 / DSM 6008 / Z-2901).